The chain runs to 366 residues: Chorismate synthase (366 aa).

Arg-48 provides a ligand contact to NADP(+). FMN-binding positions include 125-127 (RSS), Gly-283, 298-302 (KPTPS), and Arg-324.

Belongs to the chorismate synthase family. As to quaternary structure, homotetramer. Requires FMNH2 as cofactor.

It carries out the reaction 5-O-(1-carboxyvinyl)-3-phosphoshikimate = chorismate + phosphate. It functions in the pathway metabolic intermediate biosynthesis; chorismate biosynthesis; chorismate from D-erythrose 4-phosphate and phosphoenolpyruvate: step 7/7. In terms of biological role, catalyzes the anti-1,4-elimination of the C-3 phosphate and the C-6 proR hydrogen from 5-enolpyruvylshikimate-3-phosphate (EPSP) to yield chorismate, which is the branch point compound that serves as the starting substrate for the three terminal pathways of aromatic amino acid biosynthesis. This reaction introduces a second double bond into the aromatic ring system. The polypeptide is Chorismate synthase (Lachnospira eligens (strain ATCC 27750 / DSM 3376 / VPI C15-48 / C15-B4) (Eubacterium eligens)).